The primary structure comprises 223 residues: Cytidylate kinase (223 aa).

10 to 18 (GPAGTGKSS) is a binding site for ATP.

Belongs to the cytidylate kinase family. Type 1 subfamily.

The protein resides in the cytoplasm. The catalysed reaction is CMP + ATP = CDP + ADP. It carries out the reaction dCMP + ATP = dCDP + ADP. The chain is Cytidylate kinase from Mycobacterium leprae (strain Br4923).